The following is a 104-amino-acid chain: uncharacterized protein (104 aa).

Disordered stretches follow at residues 1 to 48 and 66 to 104; these read MLRR…NNQP and QENT…RRCS.

This is an uncharacterized protein from Saccharomyces cerevisiae (strain ATCC 204508 / S288c) (Baker's yeast).